A 75-amino-acid chain; its full sequence is Translation initiation factor IF-1 (75 aa).

Residues Met1 to Lys75 enclose the S1-like domain.

This sequence belongs to the IF-1 family. In terms of assembly, component of the 30S ribosomal translation pre-initiation complex which assembles on the 30S ribosome in the order IF-2 and IF-3, IF-1 and N-formylmethionyl-tRNA(fMet); mRNA recruitment can occur at any time during PIC assembly.

The protein localises to the cytoplasm. Functionally, one of the essential components for the initiation of protein synthesis. Stabilizes the binding of IF-2 and IF-3 on the 30S subunit to which N-formylmethionyl-tRNA(fMet) subsequently binds. Helps modulate mRNA selection, yielding the 30S pre-initiation complex (PIC). Upon addition of the 50S ribosomal subunit IF-1, IF-2 and IF-3 are released leaving the mature 70S translation initiation complex. This is Translation initiation factor IF-1 from Mesomycoplasma hyopneumoniae (strain 232) (Mycoplasma hyopneumoniae).